The chain runs to 469 residues: Neuraminidase (469 aa).

Over 1 to 6 the chain is Intravirion; sequence MNPNQK. Residues 7 to 29 traverse the membrane as a helical segment; it reads IITIGSVSLTIATACSLMQIAIL. The segment at 11 to 33 is involved in apical transport and lipid raft association; the sequence is GSVSLTIATACSLMQIAILATTV. At 30-469 the chain is on the virion surface side; that stretch reads ATTVTLHFKQ…DGANINFMPI (440 aa). The interval 36–88 is hypervariable stalk region; it reads HFKQHECDSPASNQVMPCEPIIIERNITEIVYLNNTTIEKEICPEVVEYRNWS. Asn61, Asn69, Asn70, and Asn86 each carry an N-linked (GlcNAc...) asparagine; by host glycan. Residues 91–469 are head of neuraminidase; that stretch reads QCQITGFAPF…DGANINFMPI (379 aa). 8 cysteine pairs are disulfide-bonded: Cys92–Cys417, Cys124–Cys129, Cys183–Cys230, Cys232–Cys237, Cys278–Cys291, Cys280–Cys289, Cys318–Cys337, and Cys421–Cys447. Position 118 (Arg118) interacts with substrate. N-linked (GlcNAc...) asparagine; by host glycosylation is present at Asn146. The active-site Proton donor/acceptor is the Asp151. Substrate is bound at residue Arg152. N-linked (GlcNAc...) asparagine; by host glycans are attached at residues Asn200 and Asn234. Residue 276 to 277 coordinates substrate; the sequence is EE. Residue Arg292 coordinates substrate. 3 residues coordinate Ca(2+): Asp293, Gly297, and Asp324. The interval 325-349 is disordered; it reads TPRNDDSSSNSNCRDPNNERGNPGV. A substrate-binding site is contributed by Arg371. N-linked (GlcNAc...) asparagine; by host glycosylation occurs at Asn402. Tyr406 acts as the Nucleophile in catalysis.

Belongs to the glycosyl hydrolase 34 family. In terms of assembly, homotetramer. It depends on Ca(2+) as a cofactor. N-glycosylated.

The protein resides in the virion membrane. Its subcellular location is the host apical cell membrane. It carries out the reaction Hydrolysis of alpha-(2-&gt;3)-, alpha-(2-&gt;6)-, alpha-(2-&gt;8)- glycosidic linkages of terminal sialic acid residues in oligosaccharides, glycoproteins, glycolipids, colominic acid and synthetic substrates.. Inhibited by the neuraminidase inhibitors zanamivir (Relenza) and oseltamivir (Tamiflu). These drugs interfere with the release of progeny virus from infected cells and are effective against all influenza strains. Resistance to neuraminidase inhibitors is quite rare. Its function is as follows. Catalyzes the removal of terminal sialic acid residues from viral and cellular glycoconjugates. Cleaves off the terminal sialic acids on the glycosylated HA during virus budding to facilitate virus release. Additionally helps virus spread through the circulation by further removing sialic acids from the cell surface. These cleavages prevent self-aggregation and ensure the efficient spread of the progeny virus from cell to cell. Otherwise, infection would be limited to one round of replication. Described as a receptor-destroying enzyme because it cleaves a terminal sialic acid from the cellular receptors. May facilitate viral invasion of the upper airways by cleaving the sialic acid moieties on the mucin of the airway epithelial cells. Likely to plays a role in the budding process through its association with lipid rafts during intracellular transport. May additionally display a raft-association independent effect on budding. Plays a role in the determination of host range restriction on replication and virulence. Sialidase activity in late endosome/lysosome traffic seems to enhance virus replication. The chain is Neuraminidase from Aves (Human).